Consider the following 293-residue polypeptide: Probable aspartoacylase (293 aa).

Residues histidine 14 and glutamate 17 each contribute to the Zn(2+) site. Substrate contacts are provided by residues arginine 56 and asparagine 63 to arginine 64. Residue histidine 106 coordinates Zn(2+). Substrate-binding residues include glutamate 165 and tyrosine 276.

This sequence belongs to the AspA/AstE family. Aspartoacylase subfamily. Requires Zn(2+) as cofactor.

The catalysed reaction is an N-acyl-L-aspartate + H2O = a carboxylate + L-aspartate. The chain is Probable aspartoacylase from Trichodesmium erythraeum (strain IMS101).